The sequence spans 311 residues: Transcriptional repressor scratch 2 (311 aa).

The SNAG domain stretch occupies residues 1–20; sequence MPRSFLVKKIKADGFQCSGV. 2 disordered regions span residues 71 to 90 and 120 to 156; these read PAYP…PQSS and RRRA…ATAG. Positions 124 to 146 are enriched in gly residues; it reads GAGGDAAGAGDAGGGGGGGGGGE. 4 consecutive C2H2-type zinc fingers follow at residues 161–183, 192–214, 218–240, and 246–268; these read HACA…KQTH, RKCP…VLTH, HKCG…MRSH, and FGCA…MQTH. The C2H2-type 5; atypical zinc-finger motif lies at 274-297; the sequence is YRCRQCDKSFALKSYLHKHCEAAC.

The protein belongs to the snail C2H2-type zinc-finger protein family.

The protein localises to the nucleus. In terms of biological role, may be involved in transcriptional regulation. This Mus musculus (Mouse) protein is Transcriptional repressor scratch 2 (Scrt2).